A 131-amino-acid chain; its full sequence is Superoxide dismutase [Ni] (131 aa).

Positions 1 to 14 (MLSRLFAPKVTVSA) are excised as a propeptide. Ni(2+) is bound by residues histidine 15, cysteine 16, and cysteine 20.

This sequence belongs to the nickel superoxide dismutase family. Homohexamer. The hexameric protein has a roughly the shape of a hollow sphere with an outer diameter of 60 angstroms and a large interior cavity. The cofactor is Ni(2+).

It is found in the cytoplasm. The enzyme catalyses 2 superoxide + 2 H(+) = H2O2 + O2. This Streptomyces coelicolor (strain ATCC BAA-471 / A3(2) / M145) protein is Superoxide dismutase [Ni] (sodN).